We begin with the raw amino-acid sequence, 124 residues long: Small ribosomal subunit protein uS12 (124 aa).

Asp-89 bears the 3-methylthioaspartic acid mark.

The protein belongs to the universal ribosomal protein uS12 family. Part of the 30S ribosomal subunit. Contacts proteins S8 and S17. May interact with IF1 in the 30S initiation complex.

Functionally, with S4 and S5 plays an important role in translational accuracy. Its function is as follows. Interacts with and stabilizes bases of the 16S rRNA that are involved in tRNA selection in the A site and with the mRNA backbone. Located at the interface of the 30S and 50S subunits, it traverses the body of the 30S subunit contacting proteins on the other side and probably holding the rRNA structure together. The combined cluster of proteins S8, S12 and S17 appears to hold together the shoulder and platform of the 30S subunit. This is Small ribosomal subunit protein uS12 from Aliivibrio salmonicida (strain LFI1238) (Vibrio salmonicida (strain LFI1238)).